The chain runs to 270 residues: MRSCGILQGKALLDELEERKKRKIIKTEEIKVLYGILTFYTMYDLEKFNSLFDYAEVMQPNIELITDEFVRTAYSGRIKEGLSYAYLMQDNIDKSREICHEILNFKDDKNCFSLLRASALVYLAESYTFESYERASWYINKSLETLELCQSERANRRKENVLNTYAFIKLVNRQGLDSISIYHPAEESFFEIVKGNYKKAEIILNNIKNENGSLKPIEYCYLGLATNDITLLEKSIELFECEGNRFYCKFPKKMLVNLSKNGTMCEGGAK.

This is an uncharacterized protein from Bacillus anthracis.